We begin with the raw amino-acid sequence, 470 residues long: Uronate isomerase (470 aa).

Belongs to the metallo-dependent hydrolases superfamily. Uronate isomerase family.

The enzyme catalyses D-glucuronate = D-fructuronate. It catalyses the reaction aldehydo-D-galacturonate = keto-D-tagaturonate. It participates in carbohydrate metabolism; pentose and glucuronate interconversion. In Salmonella newport (strain SL254), this protein is Uronate isomerase.